Consider the following 286-residue polypeptide: Versiconal hemiacetal acetate esterase stcI (286 aa).

The Involved in the stabilization of the negatively charged intermediate by the formation of the oxyanion hole motif lies at H54–G56. Catalysis depends on residues S123, D226, and H256.

The protein belongs to the 'GDXG' lipolytic enzyme family.

The enzyme catalyses (2S,3S)-versiconal hemiacetal acetate + H2O = (2S-3S)-versiconal hemiacetal + acetate + H(+). It carries out the reaction (3S)-versiconol acetate + H2O = (S)-versiconol + acetate + H(+). Its pathway is mycotoxin biosynthesis; sterigmatocystin biosynthesis. In terms of biological role, esterase; part of the gene cluster that mediates the biosynthesis of sterigmatocystin (ST), a polyketide-derived furanocoumarin which is part of the most toxic and carcinogenic compounds among the known mycotoxins. The first step in the biosynthesis of sterigmatocystin is the production of hexanoate by the fatty acid synthase (FAS) units stcJ and stcK. The polyketide backbone is assembled by the non-reducing polyketide synthase stcA by condensation of the starter hexanoyl-CoA and 7 malonyl-CoA extender units followed by cyclization and release of norsolorinic acid. Norsolorinic acid is the first stable intermediate in the biosynthesis of sterigmatocystin and is converted into averantin (AVN) by the ketoreductase stcE which reduces the hexanoate ketone to an alcohol. Averantin is then oxidized into 5'-hydroxyaverantin (HAVN) by the cytochrome P450 monooxygenase stcF. 5'-hydroxyaverantin is further converted to 5'-oxyaverantin (OAVN) by the 5'-hydroxyaverantin dehydrogenase stcG. The next step is the conversion of OAVN into averufin (AVF) which is catalyzed by a yet to be identified enzyme. The cytochrome P450 monooxygenase stcB and the flavin-binding monooxygenase stcW are both required for the conversion of averufin to 1-hydroxyversicolorone. The esterase stcI probably catalyzes the formation of versiconal hemiacetal acetate from 1-hydroxyversicolorone. The oxydoreductase stcN then probably catalyzes the biosynthetic step from versiconal to versicolorin B (VERB). The next step is performed by the versicolorin B desaturase stcL to produce versicolorin A (VERA). The ketoreductase stcU and the cytochrome P450 monooxygenase stcS are involved in the conversion of versicolorin A to demethylsterigmatocystin. The Baeyer-Villiger oxidas stcQ and the reductase stcR might be involved in the biosynthetic step from versicolorin A to demethylsterigmatocystin. The final step in the biosynthesis of sterigmatocystin is the methylation of demethylsterigmatocystin catalyzed by the methyltransferase stcP. This Emericella nidulans (strain FGSC A4 / ATCC 38163 / CBS 112.46 / NRRL 194 / M139) (Aspergillus nidulans) protein is Versiconal hemiacetal acetate esterase stcI.